The following is a 525-amino-acid chain: Glucose-6-phosphate isomerase (525 aa).

Glu347 serves as the catalytic Proton donor. Active-site residues include His378 and Lys493.

This sequence belongs to the GPI family.

The protein resides in the cytoplasm. It catalyses the reaction alpha-D-glucose 6-phosphate = beta-D-fructose 6-phosphate. Its pathway is carbohydrate biosynthesis; gluconeogenesis. The protein operates within carbohydrate degradation; glycolysis; D-glyceraldehyde 3-phosphate and glycerone phosphate from D-glucose: step 2/4. Catalyzes the reversible isomerization of glucose-6-phosphate to fructose-6-phosphate. In Chlamydia trachomatis serovar D (strain ATCC VR-885 / DSM 19411 / UW-3/Cx), this protein is Glucose-6-phosphate isomerase.